The primary structure comprises 601 residues: Coronin-like protein crn1 (601 aa).

WD repeat units follow at residues 79–119, 132–172, 174–213, 220–260, and 266–306; these read GHTA…TVME, GHSR…AHVS, KMDV…PVSV, AKNP…EPIG, and DTGS…FHYL. Disordered regions lie at residues 361–386 and 407–540; these read SDIY…KDAQ and SATV…VEEK. Basic and acidic residues-rich tracts occupy residues 419–429, 437–453, and 462–495; these read KHNEEKVETPK, KPKE…EPEV, and KVEE…EKSF. Phosphoserine is present on residues serine 500 and serine 501. The segment covering 507–526 has biased composition (basic and acidic residues); that stretch reads EDVKKEPSEEKKLEVSDEAP. Phosphoserine is present on serine 553. The stretch at 556 to 600 forms a coiled coil; it reads NLADLNKRFEGFEKRYEEELAIRDWKIAQLEDKLAKLTEAIKEKC.

This sequence belongs to the WD repeat coronin family. In terms of assembly, binds to F-actin.

This Schizosaccharomyces pombe (strain 972 / ATCC 24843) (Fission yeast) protein is Coronin-like protein crn1 (crn1).